The sequence spans 679 residues: Protein hook (679 aa).

The 118-residue stretch at 6–123 folds into the Calponin-homology (CH) domain; sequence NEMYYSLLEW…RLLQLVLGCA (118 aa). 2 coiled-coil regions span residues 135–437 and 480–574; these read EIMC…LKCG and QTAL…QEIL.

It belongs to the hook family. In terms of assembly, homodimer. Interacts with microtubules via its N-terminus.

The protein resides in the cytoplasm. Its subcellular location is the cytoskeleton. It is found in the endosome. The protein localises to the synapse. In terms of biological role, involved in endocytic trafficking by stabilizing organelles of the endocytic pathway. Probably acts as a cytoskeletal linker protein required to tether endosome vesicles to the cytoskeleton. Involved in modulation of endocytosis at stages required for down-regulation of membrane proteins that control synapse size. Not involved in synaptic vesicle recycling. Required in R7 cells for boss endocytosis into multivesicular bodies (MVBs). Has a role in regulating adult longevity. The protein is Protein hook of Drosophila yakuba (Fruit fly).